Consider the following 81-residue polypeptide: Cytochrome b559 subunit alpha (81 aa).

A helical membrane pass occupies residues 21-35 (VIHSITIPALFIAGW). Residue histidine 23 participates in heme binding.

The protein belongs to the PsbE/PsbF family. Heterodimer of an alpha subunit and a beta subunit. PSII is composed of 1 copy each of membrane proteins PsbA, PsbB, PsbC, PsbD, PsbE, PsbF, PsbH, PsbI, PsbJ, PsbK, PsbL, PsbM, PsbT, PsbX, PsbY, PsbZ, Psb30/Ycf12, at least 3 peripheral proteins of the oxygen-evolving complex and a large number of cofactors. It forms dimeric complexes. Heme b is required as a cofactor.

It localises to the plastid. Its subcellular location is the chloroplast thylakoid membrane. This b-type cytochrome is tightly associated with the reaction center of photosystem II (PSII). PSII is a light-driven water:plastoquinone oxidoreductase that uses light energy to abstract electrons from H(2)O, generating O(2) and a proton gradient subsequently used for ATP formation. It consists of a core antenna complex that captures photons, and an electron transfer chain that converts photonic excitation into a charge separation. This is Cytochrome b559 subunit alpha from Tetradesmus obliquus (Green alga).